The chain runs to 127 residues: Fluoride-specific ion channel FluC (127 aa).

Transmembrane regions (helical) follow at residues 1–21 (MMSYLIVFFGAGIGGMARHMV), 32–52 (EFPFGTLFINMLGSFLIGAVV), 71–91 (TGILGGFTTFSAFSLETVLLY), and 96–116 (VFLAASYAVASVTLSVGALLL). Positions 75 and 78 each coordinate Na(+).

This sequence belongs to the fluoride channel Fluc/FEX (TC 1.A.43) family.

It localises to the cell inner membrane. The catalysed reaction is fluoride(in) = fluoride(out). Its activity is regulated as follows. Na(+) is not transported, but it plays an essential structural role and its presence is essential for fluoride channel function. Its function is as follows. Fluoride-specific ion channel. Important for reducing fluoride concentration in the cell, thus reducing its toxicity. This chain is Fluoride-specific ion channel FluC, found in Granulibacter bethesdensis (strain ATCC BAA-1260 / CGDNIH1).